A 196-amino-acid polypeptide reads, in one-letter code: Pyridoxal 5'-phosphate synthase subunit PdxT (196 aa).

An L-glutamine-binding site is contributed by 47–49 (GES). C79 functions as the Nucleophile in the catalytic mechanism. Residues R106 and 134 to 135 (IR) each bind L-glutamine. Active-site charge relay system residues include H170 and E172.

This sequence belongs to the glutaminase PdxT/SNO family. In terms of assembly, in the presence of PdxS, forms a dodecamer of heterodimers. Only shows activity in the heterodimer.

The enzyme catalyses aldehydo-D-ribose 5-phosphate + D-glyceraldehyde 3-phosphate + L-glutamine = pyridoxal 5'-phosphate + L-glutamate + phosphate + 3 H2O + H(+). The catalysed reaction is L-glutamine + H2O = L-glutamate + NH4(+). The protein operates within cofactor biosynthesis; pyridoxal 5'-phosphate biosynthesis. Functionally, catalyzes the hydrolysis of glutamine to glutamate and ammonia as part of the biosynthesis of pyridoxal 5'-phosphate. The resulting ammonia molecule is channeled to the active site of PdxS. In Bacillus cereus (strain G9842), this protein is Pyridoxal 5'-phosphate synthase subunit PdxT.